The following is a 264-amino-acid chain: ATP synthase subunit a (264 aa).

A run of 6 helical transmembrane segments spans residues 29–49 (TWHIDSLFFSVGLGVLFLWIF), 87–107 (NALIAPLALTIFVWVFMMNFM), 134–154 (DVNITFSLAIGVFVLIIYYSI), 177–197 (IPVNLLLETVTLIAKPISLAL), 208–228 (LIFILIALMYGTNLLLSSLGV), and 235–255 (LIFHILVITLQAFIFMMLTIV).

The protein belongs to the ATPase A chain family. In terms of assembly, F-type ATPases have 2 components, CF(1) - the catalytic core - and CF(0) - the membrane proton channel. CF(1) has five subunits: alpha(3), beta(3), gamma(1), delta(1), epsilon(1). CF(0) has three main subunits: a(1), b(2) and c(9-12). The alpha and beta chains form an alternating ring which encloses part of the gamma chain. CF(1) is attached to CF(0) by a central stalk formed by the gamma and epsilon chains, while a peripheral stalk is formed by the delta and b chains.

The protein resides in the cell inner membrane. In terms of biological role, key component of the proton channel; it plays a direct role in the translocation of protons across the membrane. The sequence is that of ATP synthase subunit a from Shewanella sp. (strain MR-4).